A 360-amino-acid chain; its full sequence is Inward rectifier potassium channel 13 (360 aa).

Residues 1-50 lie on the Cytoplasmic side of the membrane; sequence MDSRNCKVNAPLLSQRYRRMVTKDGHSTLQMDGAQRGLVYLRDAWGILMD. The helical transmembrane segment at 51–77 threads the bilayer; it reads MRWRWMMLVFSASFVVHWLVFAVLWYA. Topologically, residues 78 to 105 are extracellular; the sequence is VAEMNGDLEIDHDVPPENHTICVKHITS. Residues 106-122 constitute an intramembrane region (helical; Pore-forming); sequence FTAAFSFSLETQLTIGY. The Selectivity filter signature appears at 119–124; sequence TIGYGT. Topologically, residues 123–131 are extracellular; it reads GTMFPSGDC. The chain crosses the membrane as a helical span at residues 132 to 157; that stretch reads PSAIALLAIQMLLGLMLEAFITGAFV. At 158 to 360 the chain is on the cytoplasmic side; it reads AKIARPKNRA…FQIAETGLTE (203 aa). Ser-201 carries the post-translational modification Phosphoserine; by PKC. The residue at position 287 (Ser-287) is a Phosphoserine; by PKA.

It belongs to the inward rectifier-type potassium channel (TC 1.A.2.1) family. KCNJ13 subfamily. In terms of assembly, homotetramer. Interacts with RAB28; the interaction may facilitate cone outer segments phagocytosis. Phosphorylation at Ser-201 by PKC strongly inhibits ionic currents, while phosphorylation at Ser-287 by PKA increases them.

It is found in the membrane. Its subcellular location is the cell membrane. It carries out the reaction K(+)(in) = K(+)(out). Inhibited by Ba(2+) and Cs(+), although sensitivity to those inhibitors is much lower than in other Kir channels. Its function is as follows. Inward rectifier potassium channels are characterized by a greater tendency to allow potassium to flow into the cell rather than out of it. Their voltage dependence is regulated by the concentration of extracellular potassium; as external potassium is raised, the voltage range of the channel opening shifts to more positive voltages. The inward rectification is mainly due to the blockage of outward current by internal magnesium. KCNJ13 has a very low single channel conductance, low sensitivity to block by external barium and cesium, and no dependence of its inward rectification properties on the internal blocking particle magnesium. In Rattus norvegicus (Rat), this protein is Inward rectifier potassium channel 13 (Kcnj13).